The primary structure comprises 978 residues: Glycine dehydrogenase (decarboxylating) (978 aa).

Position 726 is an N6-(pyridoxal phosphate)lysine (Lys-726).

The protein belongs to the GcvP family. In terms of assembly, the glycine cleavage system is composed of four proteins: P, T, L and H. Pyridoxal 5'-phosphate is required as a cofactor.

It catalyses the reaction N(6)-[(R)-lipoyl]-L-lysyl-[glycine-cleavage complex H protein] + glycine + H(+) = N(6)-[(R)-S(8)-aminomethyldihydrolipoyl]-L-lysyl-[glycine-cleavage complex H protein] + CO2. Its function is as follows. The glycine cleavage system catalyzes the degradation of glycine. The P protein binds the alpha-amino group of glycine through its pyridoxal phosphate cofactor; CO(2) is released and the remaining methylamine moiety is then transferred to the lipoamide cofactor of the H protein. This Paraburkholderia xenovorans (strain LB400) protein is Glycine dehydrogenase (decarboxylating).